The following is a 351-amino-acid chain: Probable protein phosphatase 2C 41 (351 aa).

The 287-residue stretch at 62 to 348 folds into the PPM-type phosphatase domain; it reads FTSICSNRGE…DDISVLCLFF (287 aa). 4 residues coordinate Mn(2+): Asp-98, Gly-99, Asp-293, and Asp-339.

This sequence belongs to the PP2C family. Mg(2+) is required as a cofactor. Mn(2+) serves as cofactor.

It carries out the reaction O-phospho-L-seryl-[protein] + H2O = L-seryl-[protein] + phosphate. The catalysed reaction is O-phospho-L-threonyl-[protein] + H2O = L-threonyl-[protein] + phosphate. The sequence is that of Probable protein phosphatase 2C 41 from Arabidopsis thaliana (Mouse-ear cress).